Reading from the N-terminus, the 383-residue chain is Transposase InsI for insertion sequence element IS30A (383 aa).

Residues 213–379 (VNGTPIHERS…TPKEIIERGV (167 aa)) enclose the Integrase catalytic domain.

It belongs to the transposase IS30 family.

Required for the transposition of the insertion element. The chain is Transposase InsI for insertion sequence element IS30A (insI1) from Escherichia coli (strain K12).